Consider the following 102-residue polypeptide: ATP-dependent Clp protease adapter protein ClpS (102 aa).

It belongs to the ClpS family. In terms of assembly, binds to the N-terminal domain of the chaperone ClpA.

Functionally, involved in the modulation of the specificity of the ClpAP-mediated ATP-dependent protein degradation. The chain is ATP-dependent Clp protease adapter protein ClpS from Shewanella woodyi (strain ATCC 51908 / MS32).